The chain runs to 827 residues: SID1 transmembrane family member 1 (827 aa).

Residues 1–19 (MRGCLRLALLCALPWLLLA) form the signal peptide. At 20 to 309 (ASPGHPAKSP…SIKESVYVKS (290 aa)) the chain is on the extracellular side. N-linked (GlcNAc...) asparagine glycans are attached at residues asparagine 57, asparagine 67, asparagine 83, asparagine 136, and asparagine 282. The chain crosses the membrane as a helical span at residues 310–330 (SLFSVFIFLSFYLGCLLVGFV). The Cytoplasmic portion of the chain corresponds to 331-442 (HYLRFQRKSI…DRRIVSKKYK (112 aa)). Residues 355–408 (ASHPIAASTPEGSNYGTIDESSSSPGRQMSSSDGGPPGQSDTDSSVEESDFDTM) are disordered. Polar residues predominate over residues 364-374 (PEGSNYGTIDE). Residues 375–397 (SSSSPGRQMSSSDGGPPGQSDTD) are compositionally biased toward low complexity. Positions 398-408 (SSVEESDFDTM) are enriched in acidic residues. A helical transmembrane segment spans residues 443-463 (IYFWNIITIAVFYALPVIQLV). The Extracellular portion of the chain corresponds to 464 to 494 (ITYQTVVNVTGNQDICYYNFLCAHPLGVLSA). The N-linked (GlcNAc...) asparagine glycan is linked to asparagine 471. A helical transmembrane segment spans residues 495–515 (FNNILSNLGHVLLGFLFLLIV). Over 516–541 (LRRDILHRRALEAKDIFAVEYGIPKH) the chain is Cytoplasmic. A helical transmembrane segment spans residues 542–562 (FGLFYAMGIALMMEGVLSACY). At 563–572 (HVCPNYSNFQ) the chain is on the extracellular side. N-linked (GlcNAc...) asparagine glycosylation is present at asparagine 567. A helical transmembrane segment spans residues 573-590 (FDTSFMYMIAGLCMLKLY). Residues 591-600 (QTRHPDINAS) lie on the Cytoplasmic side of the membrane. A helical transmembrane segment spans residues 601–621 (AYSAYASFAVVIMVTVLGVVF). Over 622–626 (GKNDV) the chain is Extracellular. Residues 627-647 (WFWVIFSAIHVLASLALSTQI) traverse the membrane as a helical segment. Residues 648 to 683 (YYMGRFKIDLGIFRRAAMVFYTDCIQQCSRPLYMDR) are Cytoplasmic-facing. The helical transmembrane segment at 684–704 (MVLLVVGNLVNWSFALFGLIY) threads the bilayer. Residues 705 to 710 (RPRDFA) are Extracellular-facing. Residues 711–731 (SYMLGIFICNLLLYLAFYIIM) form a helical membrane-spanning segment. Residues 732 to 741 (KLRSSEKVLP) are Cytoplasmic-facing. The chain crosses the membrane as a helical span at residues 742–762 (VPLFCIVATAVMWAAALYFFF). Residues 763–791 (QNLSSWEGTPAESREKNRECILLDFFDDH) lie on the Extracellular side of the membrane. Asparagine 764 is a glycosylation site (N-linked (GlcNAc...) asparagine). A helical transmembrane segment spans residues 792 to 812 (DIWHFLSATALFFSFLVLLTL). The Cytoplasmic segment spans residues 813-827 (DDDLDVVRRDQIPVF).

It belongs to the SID1 family.

Its subcellular location is the membrane. In terms of biological role, in vitro binds long double-stranded RNA (dsRNA) (500 and 700 base pairs), but not dsRNA shorter than 300 bp. Not involved in RNA autophagy, a process in which RNA is directly imported into lysosomes in an ATP-dependent manner, and degraded. This Homo sapiens (Human) protein is SID1 transmembrane family member 1 (SIDT1).